The chain runs to 1168 residues: Myosin IC heavy chain (1168 aa).

Residues 7-666 enclose the Myosin motor domain; the sequence is HGVDDMVMLT…SVFSLEELRD (660 aa). Residue 101 to 108 coordinates ATP; it reads GESGAGKT. Residue Ser-311 is modified to Phosphoserine. An actin-binding region spans residues 542–564; that stretch reads INILVATLSKCTPHYIRCIKPNE. The region spanning 704–892 is the TH1 domain; sequence KERRRLSLER…KVSVAPGLPP (189 aa). Disordered regions lie at residues 876–909, 921–978, and 1036–1168; these read DGKV…GGAS, ILGA…APGP, and AAAP…PPGM. Positions 895–909 are enriched in polar residues; sequence APNIQAPQETSGGAS. 2 stretches are compositionally biased toward gly residues: residues 924 to 939 and 950 to 959; these read AKGG…GGPS and PGGGGGGPSP. The span at 960 to 978 shows a compositional bias: low complexity; sequence FGGRPSPSGPPAAASAPGP. The SH3 domain maps to 976–1035; the sequence is PGPEQARALYDFAAENPDELTFNEGAVVTVINKSNPDWWEGELNGQRGVFPASYVELIPR. The segment covering 1040–1052 has biased composition (pro residues); sequence APGPSGGPRPAPP. Composition is skewed to gly residues over residues 1063–1083 and 1090–1099; these read GGPG…GRGG and GRAGPPGGRG. Residues 1100-1112 show a composition bias toward low complexity; it reads MPAPGGAAPRGRG. Over residues 1120-1141 the composition is skewed to gly residues; that stretch reads GPPGGGRGGAPPPGGMRGRGGP. Low complexity predominate over residues 1152–1161; that stretch reads GGMMPPRGRA.

The protein belongs to the TRAFAC class myosin-kinesin ATPase superfamily. Myosin family. Myosin I heavy chain is single-headed. Dimer of a heavy and a light chain. Inability to self-assemble into filaments.

Its function is as follows. Myosin is a protein that binds to F-actin and has ATPase activity that is activated by F-actin. The sequence is that of Myosin IC heavy chain (MIC) from Acanthamoeba castellanii (Amoeba).